The sequence spans 493 residues: Glutamate--tRNA ligase (493 aa).

The short motif at 10–20 (PSPTGDPHVGT) is the 'HIGH' region element. The 'KMSKS' region motif lies at 251–255 (KLSKR). Residue Lys254 participates in ATP binding.

Belongs to the class-I aminoacyl-tRNA synthetase family. Glutamate--tRNA ligase type 1 subfamily. As to quaternary structure, monomer.

The protein localises to the cytoplasm. The catalysed reaction is tRNA(Glu) + L-glutamate + ATP = L-glutamyl-tRNA(Glu) + AMP + diphosphate. In terms of biological role, catalyzes the attachment of glutamate to tRNA(Glu) in a two-step reaction: glutamate is first activated by ATP to form Glu-AMP and then transferred to the acceptor end of tRNA(Glu). This Pseudomonas syringae pv. syringae (strain B728a) protein is Glutamate--tRNA ligase.